We begin with the raw amino-acid sequence, 222 residues long: N-(5'-phosphoribosyl)anthranilate isomerase (222 aa).

Belongs to the TrpF family.

The enzyme catalyses N-(5-phospho-beta-D-ribosyl)anthranilate = 1-(2-carboxyphenylamino)-1-deoxy-D-ribulose 5-phosphate. It participates in amino-acid biosynthesis; L-tryptophan biosynthesis; L-tryptophan from chorismate: step 3/5. The protein is N-(5'-phosphoribosyl)anthranilate isomerase of Rhizobium rhizogenes (strain K84 / ATCC BAA-868) (Agrobacterium radiobacter).